We begin with the raw amino-acid sequence, 226 residues long: MSKDIVLISGLTKTFSSASEKLVIFDKLNFSIEEGKKISITGESGSGKSTFLNILGGLESADSGEIIAGSYKVHSLDEKSLTEYRSSFLGLVFQFHYLLKDFTALENVMLPALIAGRSKKEIKEKALSLLEDVKLAERKNHFPSQLSGGERQRVAVARSLINSPSLILADEPTGNLDPANAETVQNLLFSVVDKHKKTLVLVTHDQNIASMTDISYKLYKGNLEEV.

Positions 6–226 (VLISGLTKTF…KLYKGNLEEV (221 aa)) constitute an ABC transporter domain. 42–49 (GESGSGKS) is a binding site for ATP.

Belongs to the ABC transporter superfamily. Lipoprotein translocase (TC 3.A.1.125) family. As to quaternary structure, the complex is composed of two ATP-binding proteins (LolD) and two transmembrane proteins (LolC and LolE).

It localises to the cell inner membrane. Functionally, part of the ABC transporter complex LolCDE involved in the translocation of mature outer membrane-directed lipoproteins, from the inner membrane to the periplasmic chaperone, LolA. Responsible for the formation of the LolA-lipoprotein complex in an ATP-dependent manner. The protein is Lipoprotein-releasing system ATP-binding protein LolD of Treponema denticola (strain ATCC 35405 / DSM 14222 / CIP 103919 / JCM 8153 / KCTC 15104).